A 302-amino-acid chain; its full sequence is Sulfate adenylyltransferase subunit 2 (302 aa).

Positions 280 to 302 are disordered; the sequence is RQGRLIDSDQSASMEQKKRQGYF.

The protein belongs to the PAPS reductase family. CysD subfamily. In terms of assembly, heterodimer composed of CysD, the smaller subunit, and CysN.

The enzyme catalyses sulfate + ATP + H(+) = adenosine 5'-phosphosulfate + diphosphate. It functions in the pathway sulfur metabolism; hydrogen sulfide biosynthesis; sulfite from sulfate: step 1/3. In terms of biological role, with CysN forms the ATP sulfurylase (ATPS) that catalyzes the adenylation of sulfate producing adenosine 5'-phosphosulfate (APS) and diphosphate, the first enzymatic step in sulfur assimilation pathway. APS synthesis involves the formation of a high-energy phosphoric-sulfuric acid anhydride bond driven by GTP hydrolysis by CysN coupled to ATP hydrolysis by CysD. The protein is Sulfate adenylyltransferase subunit 2 of Shewanella baltica (strain OS195).